The following is a 303-amino-acid chain: Bidirectional sugar transporter SWEET14 (303 aa).

Residues 1 to 9 (MAGMSLQHP) are Extracellular-facing. Residues 10–30 (WAFAFGLLGNIISFMTYLAPL) traverse the membrane as a helical segment. The region spanning 13–98 (AFGLLGNIIS…AVYLVYAPKK (86 aa)) is the MtN3/slv 1 domain. The Cytoplasmic portion of the chain corresponds to 31-44 (PTFYRIYKSKSTQG). The helical transmembrane segment at 45 to 65 (FQSVPYVVALFSAMLWIYYAL) threads the bilayer. At 66-72 (LKSDECL) the chain is on the extracellular side. A helical transmembrane segment spans residues 73 to 93 (LITINSAGCVIETIYIAVYLV). At 94–105 (YAPKKAKMFTAK) the chain is on the cytoplasmic side. A helical transmembrane segment spans residues 106 to 126 (LLLLVNVGVFGLILLLTLLLS). Residues 127–133 (AGDRRIV) are Extracellular-facing. A helical membrane pass occupies residues 134–154 (VLGWVCVGFSVSVFVAPLSII). Residues 134 to 217 (VLGWVCVGFS…MGLYAMYRNS (84 aa)) form the MtN3/slv 2 domain. At 155-167 (RLVVRTKSVEFMP) the chain is on the cytoplasmic side. A helical transmembrane segment spans residues 168 to 188 (FSLSFSLTISAVVWFLYGLLI). Topologically, residues 189–192 (KDKY) are extracellular. Residues 193–213 (VALPNVLGFSFGVIQMGLYAM) traverse the membrane as a helical segment. At 214 to 303 (YRNSTPKAVL…AGAGEKKVAA (90 aa)) the chain is on the cytoplasmic side. The tract at residues 266–290 (HPVDVESPPAEAPPQEDDKAAAATA) is disordered.

It belongs to the SWEET sugar transporter family. Forms homooligomers and/or heterooligomers.

It localises to the cell membrane. Its function is as follows. Mediates both low-affinity uptake and efflux of sugar across the plasma membrane. This Oryza sativa subsp. indica (Rice) protein is Bidirectional sugar transporter SWEET14 (SWEET14).